The following is a 78-amino-acid chain: Acyl carrier protein (78 aa).

In terms of domain architecture, Carrier spans 2–77; sequence SDIAERVKKI…DAVKFIEKAQ (76 aa). O-(pantetheine 4'-phosphoryl)serine is present on S37.

It belongs to the acyl carrier protein (ACP) family. In terms of processing, 4'-phosphopantetheine is transferred from CoA to a specific serine of apo-ACP by AcpS. This modification is essential for activity because fatty acids are bound in thioester linkage to the sulfhydryl of the prosthetic group.

The protein localises to the cytoplasm. The protein operates within lipid metabolism; fatty acid biosynthesis. Carrier of the growing fatty acid chain in fatty acid biosynthesis. The protein is Acyl carrier protein of Rhizobium etli (strain CIAT 652).